Consider the following 267-residue polypeptide: Inositol-1-monophosphatase (267 aa).

Positions 66, 84, 86, and 87 each coordinate Mg(2+). Glu66 contributes to the substrate binding site. Substrate contacts are provided by residues 86–89 (LDGS), Arg182, and Asp213. Asp213 contributes to the Mg(2+) binding site.

It belongs to the inositol monophosphatase superfamily. Requires Mg(2+) as cofactor.

It catalyses the reaction a myo-inositol phosphate + H2O = myo-inositol + phosphate. In Aeropyrum pernix (strain ATCC 700893 / DSM 11879 / JCM 9820 / NBRC 100138 / K1), this protein is Inositol-1-monophosphatase (suhB).